A 3394-amino-acid polypeptide reads, in one-letter code: Protein PFC0760c (3394 aa).

Low complexity-rich tracts occupy residues 471 to 508 (NNND…NYNN), 515 to 528 (NMNS…NNLH), and 786 to 841 (NNQN…NQNN). Disordered regions lie at residues 471–539 (NNND…DENN), 779–844 (MSSN…NAGI), 1038–1099 (NKKK…NNDD), 1892–1918 (TTTT…NNND), 2648–2693 (KMDL…DNHL), 2835–2909 (AKNE…NSNN), 3000–3057 (VSVG…DVNT), and 3107–3394 (DYVN…NSEE). Positions 1038–1097 (NKKKNNDGDNKSQEDDDGNKKKNNDGDNKSQEDDDGNKKKNNDGDNKSQEDDYGNKKKNN) are enriched in basic and acidic residues. Positions 2657 to 2671 (GDDDDDDDDDDDDDN) are enriched in acidic residues. Residues 2672–2686 (NNNNNNNNNNNNNNM) are compositionally biased toward low complexity. Residues 2836–2846 (KNENYPVSTHY) are compositionally biased toward polar residues. 2 stretches are compositionally biased toward low complexity: residues 2855-2865 (DNINNDNNNDN) and 2872-2909 (NDNI…NSNN). 2 stretches are compositionally biased toward acidic residues: residues 3007–3047 (DNND…EEKE) and 3147–3257 (DDDE…DDND). The segment covering 3258–3292 (NDHNDDNNDEEKYSCHDDKNEHTNNDLLNIDHDNN) has biased composition (basic and acidic residues). Positions 3300–3309 (LYSTYNVSVS) are enriched in polar residues. A compositionally biased stretch (basic and acidic residues) spans 3310–3320 (HNKDPSNKENE). Residues 3321 to 3330 (IQNLISIDSS) show a composition bias toward polar residues. Over residues 3331 to 3379 (NENDENDENDENDENDENDENDENDENDENDENDEKDENDENDENDENF) the composition is skewed to acidic residues. The segment covering 3385–3394 (GTLNEMNSEE) has biased composition (polar residues).

In Plasmodium falciparum (isolate 3D7), this protein is Protein PFC0760c.